Consider the following 88-residue polypeptide: Phosphocarrier protein HPr (88 aa).

The HPr domain occupies 1–88 (MASKEFHIVV…ETMTKEGLAE (88 aa)). His-15 acts as the Pros-phosphohistidine intermediate in catalysis. The residue at position 46 (Ser-46) is a Phosphoserine; by HPrK/P.

This sequence belongs to the HPr family.

The protein resides in the cytoplasm. Its activity is regulated as follows. Phosphorylation on Ser-46 inhibits the phosphoryl transfer from enzyme I to HPr. General (non sugar-specific) component of the phosphoenolpyruvate-dependent sugar phosphotransferase system (sugar PTS). This major carbohydrate active-transport system catalyzes the phosphorylation of incoming sugar substrates concomitantly with their translocation across the cell membrane. The phosphoryl group from phosphoenolpyruvate (PEP) is transferred to the phosphoryl carrier protein HPr by enzyme I. Phospho-HPr then transfers it to the PTS EIIA domain. In terms of biological role, P-Ser-HPr interacts with the catabolite control protein A (CcpA), forming a complex that binds to DNA at the catabolite response elements cre, operator sites preceding a large number of catabolite-regulated genes. Thus, P-Ser-HPr is a corepressor in carbon catabolite repression (CCR), a mechanism that allows bacteria to coordinate and optimize the utilization of available carbon sources. P-Ser-HPr also plays a role in inducer exclusion, in which it probably interacts with several non-PTS permeases and inhibits their transport activity. The polypeptide is Phosphocarrier protein HPr (ptsH) (Lactococcus lactis subsp. lactis (strain IL1403) (Streptococcus lactis)).